The primary structure comprises 231 residues: Probable transglycosylase SceD (231 aa).

An N-terminal signal peptide occupies residues 1–27; sequence MKKTLLASSLAVGLGIVAGNAGHEAHA. Polar residues predominate over residues 93–116; the sequence is SAQAPATNNVEPSAVQANQVQSQE. Residues 93 to 152 are disordered; it reads SAQAPATNNVEPSAVQANQVQSQEVEAPQNAQTQQPQASTSNNSQVTATPTESKASEGSS. The segment covering 119 to 137 has biased composition (low complexity); sequence APQNAQTQQPQASTSNNSQ. Residues 138-152 show a composition bias toward polar residues; sequence VTATPTESKASEGSS.

It belongs to the transglycosylase family. SceD subfamily.

Its subcellular location is the secreted. Is able to cleave peptidoglycan and affects clumping and separation of bacterial cells. This chain is Probable transglycosylase SceD (sceD), found in Staphylococcus aureus (strain Mu3 / ATCC 700698).